We begin with the raw amino-acid sequence, 429 residues long: Histidinol dehydrogenase (429 aa).

NAD(+)-binding residues include Tyr130, Gln191, and Asn214. Residues Ser237, Gln259, and His262 each contribute to the substrate site. Zn(2+) contacts are provided by Gln259 and His262. Residues Glu327 and His328 each act as proton acceptor in the active site. His328, Asp361, Glu415, and His420 together coordinate substrate. Residue Asp361 coordinates Zn(2+). A Zn(2+)-binding site is contributed by His420.

This sequence belongs to the histidinol dehydrogenase family. The cofactor is Zn(2+).

It carries out the reaction L-histidinol + 2 NAD(+) + H2O = L-histidine + 2 NADH + 3 H(+). It participates in amino-acid biosynthesis; L-histidine biosynthesis; L-histidine from 5-phospho-alpha-D-ribose 1-diphosphate: step 9/9. Its function is as follows. Catalyzes the sequential NAD-dependent oxidations of L-histidinol to L-histidinaldehyde and then to L-histidine. This Neisseria meningitidis serogroup A / serotype 4A (strain DSM 15465 / Z2491) protein is Histidinol dehydrogenase.